Reading from the N-terminus, the 159-residue chain is 2-C-methyl-D-erythritol 2,4-cyclodiphosphate synthase (159 aa).

A divalent metal cation-binding residues include Asp-10 and His-12. 4-CDP-2-C-methyl-D-erythritol 2-phosphate-binding positions include 10 to 12 (DVH) and 36 to 37 (HS). His-44 is an a divalent metal cation binding site. 4-CDP-2-C-methyl-D-erythritol 2-phosphate-binding positions include 58 to 60 (DIG), 134 to 137 (TTSE), Phe-141, and Arg-144.

It belongs to the IspF family. As to quaternary structure, homotrimer. A divalent metal cation is required as a cofactor.

It catalyses the reaction 4-CDP-2-C-methyl-D-erythritol 2-phosphate = 2-C-methyl-D-erythritol 2,4-cyclic diphosphate + CMP. It functions in the pathway isoprenoid biosynthesis; isopentenyl diphosphate biosynthesis via DXP pathway; isopentenyl diphosphate from 1-deoxy-D-xylulose 5-phosphate: step 4/6. In terms of biological role, involved in the biosynthesis of isopentenyl diphosphate (IPP) and dimethylallyl diphosphate (DMAPP), two major building blocks of isoprenoid compounds. Catalyzes the conversion of 4-diphosphocytidyl-2-C-methyl-D-erythritol 2-phosphate (CDP-ME2P) to 2-C-methyl-D-erythritol 2,4-cyclodiphosphate (ME-CPP) with a corresponding release of cytidine 5-monophosphate (CMP). The chain is 2-C-methyl-D-erythritol 2,4-cyclodiphosphate synthase from Cereibacter sphaeroides (strain ATCC 17029 / ATH 2.4.9) (Rhodobacter sphaeroides).